The chain runs to 500 residues: Aspartyl/glutamyl-tRNA(Asn/Gln) amidotransferase subunit B (500 aa).

It belongs to the GatB/GatE family. GatB subfamily. In terms of assembly, heterotrimer of A, B and C subunits.

The catalysed reaction is L-glutamyl-tRNA(Gln) + L-glutamine + ATP + H2O = L-glutaminyl-tRNA(Gln) + L-glutamate + ADP + phosphate + H(+). It carries out the reaction L-aspartyl-tRNA(Asn) + L-glutamine + ATP + H2O = L-asparaginyl-tRNA(Asn) + L-glutamate + ADP + phosphate + 2 H(+). Allows the formation of correctly charged Asn-tRNA(Asn) or Gln-tRNA(Gln) through the transamidation of misacylated Asp-tRNA(Asn) or Glu-tRNA(Gln) in organisms which lack either or both of asparaginyl-tRNA or glutaminyl-tRNA synthetases. The reaction takes place in the presence of glutamine and ATP through an activated phospho-Asp-tRNA(Asn) or phospho-Glu-tRNA(Gln). The polypeptide is Aspartyl/glutamyl-tRNA(Asn/Gln) amidotransferase subunit B (Clavibacter michiganensis subsp. michiganensis (strain NCPPB 382)).